The primary structure comprises 315 residues: DNA-directed RNA polymerase subunit alpha (315 aa).

Residues Met1–Thr228 form an alpha N-terminal domain (alpha-NTD) region. An alpha C-terminal domain (alpha-CTD) region spans residues Lys245 to Glu315.

This sequence belongs to the RNA polymerase alpha chain family. As to quaternary structure, homodimer. The RNAP catalytic core consists of 2 alpha, 1 beta, 1 beta' and 1 omega subunit. When a sigma factor is associated with the core the holoenzyme is formed, which can initiate transcription.

The enzyme catalyses RNA(n) + a ribonucleoside 5'-triphosphate = RNA(n+1) + diphosphate. Its function is as follows. DNA-dependent RNA polymerase catalyzes the transcription of DNA into RNA using the four ribonucleoside triphosphates as substrates. In Clostridium novyi (strain NT), this protein is DNA-directed RNA polymerase subunit alpha.